The following is a 166-amino-acid chain: Tegument protein UL55 homolog (166 aa).

This sequence belongs to the alphaherpesvirinae HHV-1 UL55 family.

The protein localises to the virion tegument. It localises to the host nucleus matrix. The chain is Tegument protein UL55 homolog (MDV070) from Gallid herpesvirus 2 (strain Chicken/Md5/ATCC VR-987) (GaHV-2).